A 242-amino-acid chain; its full sequence is uncharacterized protein (242 aa).

It belongs to the IIV-6 415R family.

This is an uncharacterized protein from Invertebrate iridescent virus 6 (IIV-6).